Consider the following 359-residue polypeptide: Cytoplasmic tRNA 2-thiolation protein 1 (359 aa).

It belongs to the TtcA family. CTU1/NCS6/ATPBD3 subfamily. Interacts with NCS2 and URM1. May act by forming a heterodimer with NCS2. Component of a large molecular weight complex of more than 250 kDa.

Its subcellular location is the cytoplasm. It is found in the mitochondrion. It functions in the pathway tRNA modification; 5-methoxycarbonylmethyl-2-thiouridine-tRNA biosynthesis. Its function is as follows. Plays a central role in 2-thiolation of mcm(5)S(2)U at tRNA wobble positions of tRNA(Lys), tRNA(Glu) and tRNA(Gln). Directly binds tRNAs and probably acts by catalyzing adenylation of tRNAs, an intermediate required for 2-thiolation. It is unclear whether it acts as a sulfurtransferase that transfers sulfur from thiocarboxylated URM1 onto the uridine of tRNAs at wobble position. Prior mcm(5) tRNA modification by the elongator complex is required for 2-thiolation. May also be involved in protein urmylation. In Saccharomyces cerevisiae (strain RM11-1a) (Baker's yeast), this protein is Cytoplasmic tRNA 2-thiolation protein 1.